The chain runs to 397 residues: MASITHRRNAVLGAAFLMATSAIGPGFLTQTATFTNTLLASFGFVILLSILLDIGAQLNIWRIVIVSGKRAQDISNAVFPKAGYFLAALIVMGGLAFNIGNVGGAGLGLNSIFGIAPEMGAVISGIIAILIFLRKEAGLLMDRFAQLMGFIMVVLTFYVMFKTEPPVVEAAYHSFIPEQIDPIAIVTLVGGTVGGYITFAGAHRLLDAGIQGEKAMAEVSRSSVSAILIASTMRVVLFLAVLGVVSKGVSLNPKNPAETPFEYVAGNFGQVLFGVVIWAASVTSVIGAAYTSVSFLTTLCPTIERNRNRWIIAFIVISTVVLVTVGKPAAVLVFVGTLNGLILPIALALILLAAYRSDIVGTYKHPVFLAFSGWFVVIIMAILSGKTIISYISSFFS.

Transmembrane regions (helical) follow at residues 9 to 29 (NAVL…GFLT), 38 to 58 (LLAS…GAQL), 85 to 105 (FLAA…VGGA), 112 to 132 (IFGI…ILIF), 148 to 168 (MGFI…PPVV), 182 to 202 (PIAI…FAGA), 226 to 246 (AILI…GVVS), 271 to 291 (VLFG…AAYT), 310 to 330 (WIIA…KPAA), 331 to 351 (VLVF…ALIL), and 365 to 385 (HPVF…ILSG).

It belongs to the NRAMP family.

The protein resides in the cell membrane. This is an uncharacterized protein from Haemophilus influenzae (strain ATCC 51907 / DSM 11121 / KW20 / Rd).